The following is a 421-amino-acid chain: PDZ and LIM domain protein 7 (421 aa).

The 85-residue stretch at methionine 1–alanine 85 folds into the PDZ domain. The interval isoleucine 115–tryptophan 193 is disordered. Over residues tyrosine 147–lysine 172 the composition is skewed to polar residues. LIM zinc-binding domains are found at residues proline 244 to alanine 302, proline 303 to threonine 362, and lysine 363 to valine 421.

Its subcellular location is the cytoplasm. It is found in the cytoskeleton. Functionally, may function as a scaffold on which the coordinated assembly of proteins can occur. May play a role as an adapter that, via its PDZ domain, localizes LIM-binding proteins to actin filaments of both skeletal muscle and nonmuscle tissues. The chain is PDZ and LIM domain protein 7 (pdlim7) from Xenopus laevis (African clawed frog).